A 47-amino-acid chain; its full sequence is Lysis protein for colicins E2 and E3 (47 aa).

The first 19 residues, 1-19 (MKKITGIILLLLAVIILSA), serve as a signal peptide directing secretion. Residue cysteine 20 is the site of N-palmitoyl cysteine attachment. Residue cysteine 20 is the site of S-diacylglycerol cysteine attachment.

Its subcellular location is the cell outer membrane. In terms of biological role, lysis proteins are required for both colicin release and partial cell lysis. This is Lysis protein for colicins E2 and E3 (hic) from Escherichia coli.